The sequence spans 700 residues: Elongation factor G (700 aa).

Residues 8 to 290 (SLYRNIGISA…AVIDYLPAPT (283 aa)) form the tr-type G domain. Residues 17–24 (AHIDAGKT), 88–92 (DTPGH), and 142–145 (NKMD) each bind GTP.

This sequence belongs to the TRAFAC class translation factor GTPase superfamily. Classic translation factor GTPase family. EF-G/EF-2 subfamily.

It localises to the cytoplasm. Its function is as follows. Catalyzes the GTP-dependent ribosomal translocation step during translation elongation. During this step, the ribosome changes from the pre-translocational (PRE) to the post-translocational (POST) state as the newly formed A-site-bound peptidyl-tRNA and P-site-bound deacylated tRNA move to the P and E sites, respectively. Catalyzes the coordinated movement of the two tRNA molecules, the mRNA and conformational changes in the ribosome. The chain is Elongation factor G from Histophilus somni (strain 129Pt) (Haemophilus somnus).